The chain runs to 111 residues: Nucleoid-associated protein NGK_1136 (111 aa).

It belongs to the YbaB/EbfC family. Homodimer.

Its subcellular location is the cytoplasm. The protein localises to the nucleoid. Functionally, binds to DNA and alters its conformation. May be involved in regulation of gene expression, nucleoid organization and DNA protection. The chain is Nucleoid-associated protein NGK_1136 from Neisseria gonorrhoeae (strain NCCP11945).